The primary structure comprises 267 residues: 26S proteasome non-ATPase regulatory subunit 8 homolog A (267 aa).

At Met1 the chain carries N-acetylmethionine. The PCI domain occupies 79–251 (DAFERDFFQL…APCKEIPSLQ (173 aa)).

This sequence belongs to the proteasome subunit S14 family. As to quaternary structure, component of the 19S regulatory particle (RP/PA700) lid subcomplex of the 26S proteasome. The 26S proteasome is composed of a core protease (CP), known as the 20S proteasome, capped at one or both ends by the 19S regulatory particle (RP/PA700). The RP/PA700 complex is composed of at least 17 different subunits in two subcomplexes, the base and the lid, which form the portions proximal and distal to the 20S proteolytic core, respectively. Interacts with PUB22 and PUB23. Binds to the translation initiation factors TIF3E1. Interacts with UCH1 and UCH2. Ubiquitinated by PUB22 and PUB23. As to expression, ubiquitous with highest expression in flowers.

In terms of biological role, acts as a regulatory subunit of the 26S proteasome which is involved in the ATP-dependent degradation of ubiquitinated proteins. May help to control the degradation of one or more factors that repress cytokinin signaling. Plays an important role for balancing cell expansion with cell proliferation rates during shoot development. The sequence is that of 26S proteasome non-ATPase regulatory subunit 8 homolog A from Arabidopsis thaliana (Mouse-ear cress).